Here is a 303-residue protein sequence, read N- to C-terminus: Glutathione transport system permease protein GsiD (303 aa).

The next 6 membrane-spanning stretches (helical) occupy residues 40–60 (AMTAALFVILLIVVAIFARWI), 105–125 (LAAGVFAVFIGAAIGTLLGLL), 144–164 (LFAFPGILLAIAVVAVLGSGI), 165–185 (ANVIIAVAIFSIPAFARLVRG), 222–242 (IVVFFTMRIGTSIISAASLSF), and 266–286 (VIAPHVAVFPALAIFLTVLAF). The region spanning 101–290 (AQISLAAGVF…LTVLAFNLLG (190 aa)) is the ABC transmembrane type-1 domain.

It belongs to the binding-protein-dependent transport system permease family. The complex is composed of two ATP-binding proteins (GsiA), two transmembrane proteins (GsiC and GsiD) and a solute-binding protein (GsiB).

It is found in the cell inner membrane. Functionally, part of the ABC transporter complex GsiABCD involved in glutathione import. Probably responsible for the translocation of the substrate across the membrane. The sequence is that of Glutathione transport system permease protein GsiD from Escherichia coli O157:H7.